Reading from the N-terminus, the 538-residue chain is Carboxypeptidase 2 (538 aa).

The first 21 residues, 1 to 21, serve as a signal peptide directing secretion; that stretch reads MVAYRFLTLISLGLGSHCVSA. N46 carries N-linked (GlcNAc...) asparagine glycosylation. The segment at 53 to 76 is disordered; it reads PAFTSPGTVSRGFSDGTSGPTRDE. Positions 71-351 constitute a Peptidase M14 domain; sequence GPTRDETMEG…VMAKSVLQTA (281 aa). Residues H136, E139, and H224 each coordinate Zn(2+). The active-site Proton donor/acceptor is E322. N-linked (GlcNAc...) asparagine glycans are attached at residues N393 and N459.

Belongs to the peptidase M14 family. It depends on Zn(2+) as a cofactor.

It is found in the secreted. In terms of biological role, extracellular metalloprotease that contributes to pathogenicity. This is Carboxypeptidase 2 (MCPB) from Trichophyton rubrum (Athlete's foot fungus).